Here is a 445-residue protein sequence, read N- to C-terminus: Gamma-glutamyl phosphate reductase (445 aa).

The protein belongs to the gamma-glutamyl phosphate reductase family.

Its subcellular location is the cytoplasm. The enzyme catalyses L-glutamate 5-semialdehyde + phosphate + NADP(+) = L-glutamyl 5-phosphate + NADPH + H(+). It functions in the pathway amino-acid biosynthesis; L-proline biosynthesis; L-glutamate 5-semialdehyde from L-glutamate: step 2/2. Functionally, catalyzes the NADPH-dependent reduction of L-glutamate 5-phosphate into L-glutamate 5-semialdehyde and phosphate. The product spontaneously undergoes cyclization to form 1-pyrroline-5-carboxylate. The polypeptide is Gamma-glutamyl phosphate reductase (Synechococcus sp. (strain RCC307)).